Here is a 266-residue protein sequence, read N- to C-terminus: Undecaprenyl-diphosphatase (266 aa).

8 helical membrane-spanning segments follow: residues 1–21 (MDTF…FLPI), 39–59 (QGLS…VIYF), 87–107 (WWII…KDFI), 111–131 (LRSA…LWWA), 149–169 (ALLI…RSGA), 183–203 (AAAR…AILV), 218–238 (ALTL…HYFL), and 246–266 (MTPF…FIFL).

This sequence belongs to the UppP family.

The protein localises to the cell inner membrane. The catalysed reaction is di-trans,octa-cis-undecaprenyl diphosphate + H2O = di-trans,octa-cis-undecaprenyl phosphate + phosphate + H(+). In terms of biological role, catalyzes the dephosphorylation of undecaprenyl diphosphate (UPP). Confers resistance to bacitracin. The polypeptide is Undecaprenyl-diphosphatase (Shewanella sp. (strain MR-7)).